Reading from the N-terminus, the 240-residue chain is Putative truncated effector protein hopW1-2 (240 aa).

Residues Met1–Pro32 are disordered. A compositionally biased stretch (low complexity) spans Thr9 to Ser23.

Belongs to the HopW family.

This chain is Putative truncated effector protein hopW1-2 (hopW1-2), found in Pseudomonas syringae pv. maculicola.